A 267-amino-acid chain; its full sequence is MADS-box transcription factor 15 (267 aa).

The MADS-box domain maps to 1-61; sequence MGRGKVQLKR…GKLYEYATDS (61 aa). One can recognise a K-box domain in the interval 88-178; that stretch reads EGNWCHEYRK…QKELVERQKN (91 aa). The disordered stretch occupies residues 179-215; it reads VRGQQQVGQWDQTQVQAQAQAQPQAQTSSSSSSMLRD. Residues 182–215 show a composition bias toward low complexity; that stretch reads QQQVGQWDQTQVQAQAQAQPQAQTSSSSSSMLRD.

As to quaternary structure, may interact with the K-box of MADS1 and MADS6.

It is found in the nucleus. Functionally, probable transcription factor. The chain is MADS-box transcription factor 15 (MADS15) from Oryza sativa subsp. japonica (Rice).